The chain runs to 465 residues: MPIKRLDTVVVNTGSQNDQHSASVPPVYLSTTFKVDLNNEDAQNYDYSRSGNPTRSVLQHQIGKLYRVPQENVLAVSSGMTALDVILRGLVLLNGTDNHTPTIIAGDDLYGGTQRLLNFFKQQSHAVSVHVDTSDFEKFKTVFQSLDKVDCVLLESPTNPLCKVVDIPRILRFVKCISPDTTVVVDNTMMSGLNCNPLQLNPGCDVVYESATKYLNGHHDLMGGVIISKTPEIASKLYFVINSTGAGLSPMDSWLLVRGLKTLGVRLYQQQRNAMILAHWLENSCGFKPTRTNKATKTRFVGLRSNPDFKLHKSFNNGPGAVLSFETGSFEHSKRLVSSKKLSIWAVTVSFGCVNSLLSMPCKMSHASIDPELRKERDFPEDLVRLCCGIENIVDLKKDLLAAMVDADIIEVRENGKYLFNKLNKNLAVNTTIDDLHKPLSIYEEFYNQDLIRKDSELNIKSSKL.

Residue Lys-213 is modified to N6-(pyridoxal phosphate)lysine.

It belongs to the trans-sulfuration enzymes family. The cofactor is pyridoxal 5'-phosphate.

It is found in the cytoplasm. The protein localises to the nucleus. It catalyses the reaction L,L-cystathionine + H2O = L-homocysteine + pyruvate + NH4(+). It carries out the reaction an S-substituted L-cysteine + H2O = a thiol + pyruvate + NH4(+). Its pathway is amino-acid biosynthesis; L-methionine biosynthesis via de novo pathway; L-homocysteine from L-cystathionine: step 1/1. The polypeptide is Cystathionine beta-lyase (STR3) (Saccharomyces cerevisiae (strain ATCC 204508 / S288c) (Baker's yeast)).